Consider the following 244-residue polypeptide: Probable transcriptional regulatory protein MMOB1910 (244 aa).

The protein belongs to the TACO1 family.

It localises to the cytoplasm. This Mycoplasma mobile (strain ATCC 43663 / 163K / NCTC 11711) (Mesomycoplasma mobile) protein is Probable transcriptional regulatory protein MMOB1910.